The following is a 122-amino-acid chain: Small ribosomal subunit protein uS13 (122 aa).

Over residues 97–114 (PVRGQRTHTNAKTRKGKS) the composition is skewed to basic residues. Residues 97-122 (PVRGQRTHTNAKTRKGKSRLPIAGKE) form a disordered region.

The protein belongs to the universal ribosomal protein uS13 family. Part of the 30S ribosomal subunit. Forms a loose heterodimer with protein S19. Forms two bridges to the 50S subunit in the 70S ribosome.

Functionally, located at the top of the head of the 30S subunit, it contacts several helices of the 16S rRNA. In the 70S ribosome it contacts the 23S rRNA (bridge B1a) and protein L5 of the 50S subunit (bridge B1b), connecting the 2 subunits; these bridges are implicated in subunit movement. Contacts the tRNAs in the A and P-sites. The sequence is that of Small ribosomal subunit protein uS13 from Wolbachia sp. subsp. Brugia malayi (strain TRS).